We begin with the raw amino-acid sequence, 449 residues long: Glutamyl-tRNA reductase (449 aa).

Substrate is bound by residues 58–61 (TCNR), Ser121, 126–128 (ETQ), and Gln132. Residue Cys59 is the Nucleophile of the active site. 203-208 (GLGEMA) contributes to the NADP(+) binding site.

The protein belongs to the glutamyl-tRNA reductase family. As to quaternary structure, homodimer.

It carries out the reaction (S)-4-amino-5-oxopentanoate + tRNA(Glu) + NADP(+) = L-glutamyl-tRNA(Glu) + NADPH + H(+). It functions in the pathway porphyrin-containing compound metabolism; protoporphyrin-IX biosynthesis; 5-aminolevulinate from L-glutamyl-tRNA(Glu): step 1/2. Catalyzes the NADPH-dependent reduction of glutamyl-tRNA(Glu) to glutamate 1-semialdehyde (GSA). The sequence is that of Glutamyl-tRNA reductase from Helicobacter pylori (strain G27).